Here is a 359-residue protein sequence, read N- to C-terminus: DNA integrity scanning protein DisA (359 aa).

The 139-residue stretch at 7–145 (DPTGRAVLRA…DGRRWVLEDS (139 aa)) folds into the DAC domain. ATP contacts are provided by residues Gly-74, Leu-92, and 105 to 109 (TRHRT).

It belongs to the DisA family. In terms of assembly, homooctamer. The cofactor is Mg(2+).

It carries out the reaction 2 ATP = 3',3'-c-di-AMP + 2 diphosphate. Functionally, participates in a DNA-damage check-point. DisA forms globular foci that rapidly scan along the chromosomes searching for lesions. Also has diadenylate cyclase activity, catalyzing the condensation of 2 ATP molecules into cyclic di-AMP (c-di-AMP). c-di-AMP likely acts as a signaling molecule that may couple DNA integrity with a cellular process. The chain is DNA integrity scanning protein DisA from Beutenbergia cavernae (strain ATCC BAA-8 / DSM 12333 / CCUG 43141 / JCM 11478 / NBRC 16432 / NCIMB 13614 / HKI 0122).